A 1813-amino-acid polypeptide reads, in one-letter code: Sucrase-isomaltase, intestinal (1813 aa).

The Cytoplasmic segment spans residues 1-12; the sequence is MARKKSSGLKIT. At Ser7 the chain carries Phosphoserine; by PKA. A helical; Signal-anchor for type II membrane protein transmembrane segment spans residues 13-32; that stretch reads LIVLLAIVTIIAIALVAILP. At 33–1813 the chain is on the lumenal side; that stretch reads TKTPAVELVS…LDEPIEISWT (1781 aa). The P-type 1 domain maps to 46 to 95; that stretch reads GKCPSAENDRLDEKINCIPDQFPTQALCAMQGCCWNPRNESPTPWCSFAN. 3 disulfides stabilise this stretch: Cys48/Cys79, Cys62/Cys78, and Cys73/Cys91. The interval 95–991 is isomaltase; that stretch reads NNHGYEFEKI…DLELNTATAR (897 aa). Asn127 is a glycosylation site (N-linked (GlcNAc...) asparagine). 2 residues coordinate substrate: Asp250 and Asp374. Tyr377 is subject to Sulfotyrosine. An N-linked (GlcNAc...) asparagine glycan is attached at Asn388. Catalysis depends on Asp491, which acts as the Nucleophile; for isomaltase activity. A disulfide bridge links Cys506 with Cys531. Substrate is bound at residue Arg574. The active-site For isomaltase activity is Asp590. Cys621 and Cys632 are oxidised to a cystine. His648 contributes to the substrate binding site. N-linked (GlcNAc...) asparagine glycosylation is found at Asn669, Asn791, Asn896, and Asn911. In terms of domain architecture, P-type 2 spans 917–962; it reads NQVSLDSEKIDCFPDNNPENKQNCEERGCLWEPNSAAEGPRCYFPK. The segment at 992–1813 is sucrase; the sequence is IKMPSNPISV…LDEPIEISWT (822 aa). Asn1221 and Asn1289 each carry an N-linked (GlcNAc...) asparagine glycan. Tyr1294 carries the post-translational modification Sulfotyrosine. N-linked (GlcNAc...) asparagine glycans are attached at residues Asn1326 and Asn1340. Tyr1368 and Tyr1371 each carry sulfotyrosine. Residue Asp1380 is the Nucleophile; for sucrase activity of the active site. The For sucrase activity role is filled by Glu1383. The N-linked (GlcNAc...) asparagine glycan is linked to Asn1432. The Proton donor; for sucrase activity role is filled by Asp1486. N-linked (GlcNAc...) asparagine glycosylation is found at Asn1521, Asn1545, Asn1558, Asn1703, and Asn1772.

Belongs to the glycosyl hydrolase 31 family. The resulting sucrase and isomaltase subunits stay associated with one another in a complex by non-covalent linkages. Post-translationally, the precursor is proteolytically cleaved when exposed to pancreatic proteases in the intestinal lumen. In terms of processing, sulfated.

It localises to the apical cell membrane. The enzyme catalyses Hydrolysis of sucrose and maltose by an alpha-D-glucosidase-type action.. It catalyses the reaction Hydrolysis of (1-&gt;6)-alpha-D-glucosidic linkages in some oligosaccharides produced from starch and glycogen by alpha-amylase, and in isomaltose.. Plays an important role in the final stage of carbohydrate digestion. Isomaltase activity is specific for both alpha-1,4- and alpha-1,6-oligosaccharides. This is Sucrase-isomaltase, intestinal (SI) from Suncus murinus (Asian house shrew).